Here is a 126-residue protein sequence, read N- to C-terminus: Heterotrimeric G protein gamma subunit GPG1 (126 aa).

As to quaternary structure, g proteins are composed of 3 units, alpha, beta and gamma. GPG1 interacts with the beta subunits GBP1 and GPB2.

It localises to the cytoplasm. In terms of biological role, gamma subunit of a guanine nucleotide-binding protein (G protein). G proteins are involved as modulators or transducers in various transmembrane signaling systems. The beta and gamma chains are required for the GTPase activity, for replacement of GDP by GTP, and for G protein-effector interaction. Involved in the determination of the cAMP level according to nutritional conditions, most probably as a regulator of cAMP phosphodiesterase. Required for the control of pseudohyphal and haploid invasive growth. This chain is Heterotrimeric G protein gamma subunit GPG1 (GPG1), found in Saccharomyces cerevisiae (strain ATCC 204508 / S288c) (Baker's yeast).